A 645-amino-acid chain; its full sequence is COP9 signalosome complex subunit 10 (645 aa).

The span at 1 to 45 shows a compositional bias: acidic residues; sequence MSDEDNNYDDFMLSDDEGMESIEMEEETDDEDKQNIEINEDNSQD. The segment at 1–63 is disordered; the sequence is MSDEDNNYDD…HKQHEQGTFE (63 aa). The segment covering 46–63 has biased composition (basic and acidic residues); it reads DQDRGAARHKQHEQGTFE. Residues 348–543 form the PCI domain; that stretch reads DLSFALMRYY…DLVYFGDENK (196 aa).

As to quaternary structure, component of a COP9 signalosome-like (CSN) complex, composed of at least RRI1/CSN5, CSN9, RRI2/CSN10, PCI8/CSN11, CSN12 and CSI1. In the complex, it probably interacts directly with CSN12.

It is found in the cytoplasm. The protein localises to the nucleus. In terms of biological role, component of the COP9 signalosome (CSN) complex that acts as an regulator of the ubiquitin (Ubl) conjugation pathway by mediating the deneddylation of the cullin subunit of SCF-type E3 ubiquitin-protein ligase complexes. The CSN complex is involved in the regulation of the mating pheromone response. This is COP9 signalosome complex subunit 10 (RRI2) from Saccharomyces cerevisiae (strain ATCC 204508 / S288c) (Baker's yeast).